The following is a 364-amino-acid chain: Aspartate aminotransferase (364 aa).

The L-aspartate site is built by glycine 23, tryptophan 99, and asparagine 143. The residue at position 200 (lysine 200) is an N6-(pyridoxal phosphate)lysine. Arginine 320 contacts L-aspartate.

Belongs to the class-I pyridoxal-phosphate-dependent aminotransferase family. Homodimer. Pyridoxal 5'-phosphate is required as a cofactor.

It localises to the cytoplasm. The enzyme catalyses L-aspartate + 2-oxoglutarate = oxaloacetate + L-glutamate. The protein is Aspartate aminotransferase (aspC) of Thermococcus kodakarensis (strain ATCC BAA-918 / JCM 12380 / KOD1) (Pyrococcus kodakaraensis (strain KOD1)).